The sequence spans 446 residues: 3-phosphoshikimate 1-carboxyvinyltransferase (446 aa).

3 residues coordinate 3-phosphoshikimate: K21, S22, and R26. Residue K21 participates in phosphoenolpyruvate binding. Positions 94 and 122 each coordinate phosphoenolpyruvate. 3-phosphoshikimate-binding residues include S167, Q169, D315, and K342. Q169 contributes to the phosphoenolpyruvate binding site. The active-site Proton acceptor is the D315. Residues R346 and R388 each coordinate phosphoenolpyruvate.

Belongs to the EPSP synthase family. In terms of assembly, monomer.

Its subcellular location is the cytoplasm. It carries out the reaction 3-phosphoshikimate + phosphoenolpyruvate = 5-O-(1-carboxyvinyl)-3-phosphoshikimate + phosphate. It participates in metabolic intermediate biosynthesis; chorismate biosynthesis; chorismate from D-erythrose 4-phosphate and phosphoenolpyruvate: step 6/7. Its function is as follows. Catalyzes the transfer of the enolpyruvyl moiety of phosphoenolpyruvate (PEP) to the 5-hydroxyl of shikimate-3-phosphate (S3P) to produce enolpyruvyl shikimate-3-phosphate and inorganic phosphate. This chain is 3-phosphoshikimate 1-carboxyvinyltransferase, found in Alkalilimnicola ehrlichii (strain ATCC BAA-1101 / DSM 17681 / MLHE-1).